The sequence spans 478 residues: 5-hydroxytryptamine receptor 3A (478 aa).

Residues 1–23 (MLLWVQQALLALLLPTLLAQGEA) form the signal peptide. At 24-241 (RRSRNTTRPA…MKFYVVIRRR (218 aa)) the chain is on the extracellular side. N28, N104, N170, and N186 each carry an N-linked (GlcNAc...) asparagine glycan. C157 and C171 are oxidised to a cystine. A helical transmembrane segment spans residues 242–268 (PLFYVVSLLLPSIFLMVMDIVGFYLPP). The Cytoplasmic portion of the chain corresponds to 269–273 (NSGER). A helical transmembrane segment spans residues 274 to 292 (VSFKITLLLGYSVFLIIVS). Residues 293 to 302 (DTLPATAIGT) lie on the Extracellular side of the membrane. The helical transmembrane segment at 303–321 (PLIGVYFVVCMALLVISLA) threads the bilayer. Residues 322-455 (ETIFIVRLVH…GSVLDKLLFH (134 aa)) lie on the Cytoplasmic side of the membrane. Residues 389-408 (GGPQDFEKSPRDRCSPPPPP) are disordered. Basic and acidic residues predominate over residues 393–402 (DFEKSPRDRC). The tract at residues 414–450 (AVCGLLQELSSIRQFLEKRDEIREVARDWLRVGSVLD) is HA-stretch; determines single-channel conductance in 5-HT3 receptors. The helical transmembrane segment at 456 to 475 (IYLLAVLAYSITLVMLWSIW) threads the bilayer. Residues 476–478 (QYA) are Extracellular-facing.

This sequence belongs to the ligand-gated ion channel (TC 1.A.9) family. 5-hydroxytryptamine receptor (TC 1.A.9.2) subfamily. HTR3A sub-subfamily. Forms homopentameric as well as heteropentameric serotonin-activated cation-selective channel complexes with HTR3B or HTR3C or HTR3D or HTR3E. The homomeric complex is functional but exhibits low conductance with modified voltage dependence, and decreased agonist and antagonist affinity. Heteropentameric complexes display properties which resemble that of neuronal serotonin-activated channels in vivo. Interacts with RIC3. Expressed in cerebral cortex, amygdala, hippocampus, and testis. Detected in monocytes of the spleen and tonsil, in small and large intestine, uterus, prostate, ovary and placenta.

Its subcellular location is the postsynaptic cell membrane. The protein localises to the cell membrane. The catalysed reaction is Na(+)(in) = Na(+)(out). The enzyme catalyses K(+)(in) = K(+)(out). It carries out the reaction Ca(2+)(in) = Ca(2+)(out). It catalyses the reaction Mg(2+)(in) = Mg(2+)(out). Forms serotonin (5-hydroxytryptamine/5-HT3)-activated cation-selective channel complexes, which when activated cause fast, depolarizing responses in neurons. The chain is 5-hydroxytryptamine receptor 3A from Homo sapiens (Human).